Reading from the N-terminus, the 912-residue chain is MSGKGGWAWWWARLPLCLLLSLYGSWVPSSLGKPKGHPHMNSIRIDGDITLGGLFPVHGRGSEGKACGELKKEKGIHRLEAMLFALDRINNDPDLLPNITLGARILDTCSRDTHALEQSLTFVQALIEKDGTEVRCGSGGPPIITKPERVVGVIGASGSSVSIMVANILRLFKIPQISYASTAPDLSDNSRYDFFSRVVPSDTYQAQAMVDIVRALKWNYVSTLASEGSYGESGVEAFIQKSRENGGVCIAQSVKIPREPKTGEFDKIIKRLLETSNARAIIIFANEDDIRRVLEAARRANQTGHFFWMGSDSWGSKSAPVLRLEEVAEGAVTILPKRTSVRGFDRYFSSRTLDNNRRNIWFAEFWEDNFHCKLSRHALKKGSHIKKCTNRERIGQDSAYEQEGKVQFVIDAVYAMGHALHAMHRDLCPGRVGLCPRMDPVDGTQLLKYIRNVNFSGIAGNPVTFNENGDAPGRYDIYQYQRRNGSAEYKVIGSWTDHLHLRIERMQWPGSGQQLPRSICSLPCQPGERKKTVKGMACCWHCEPCTGYQYQVDRYTCKTCPYDMRPTENRTSCQPIPIVKLEWDSPWAVLPLFLAVVGIAATLFVVVTFVRYNDTPIVKASGRELSYVLLAGIFLCYATTFLMIAEPDLGTCSLRRIFLGLGMSISYAALLTKTNRIYRIFEQGKRSVSAPRFISPASQLAITFVLISLQLLCICVWFVVDPSHSVVDFQDQRTLDPRFARGVLKCDISDLSLICLLGYSMLLMVTCTVYAIKTRGVPETFNEAKPIGFTMYTTCIVWLAFIPIFFGTSQSADKLYIQTTTLTVSVSLSASVSLGMLYMPKVYIILFHPEQNVPKRKRSLKAVVTAATMSNKFTQKGNFRPNGEAKSELCENLEAPALATKQTYVTYTNHAI.

Positions 1–32 (MSGKGGWAWWWARLPLCLLLSLYGSWVPSSLG) are cleaved as a signal peptide. Over 33–586 (KPKGHPHMNS…PIVKLEWDSP (554 aa)) the chain is Extracellular. C67 and C109 form a disulfide bridge. N-linked (GlcNAc...) asparagine glycosylation occurs at N98. Residues S159, 180-182 (AST), and Y230 contribute to the L-glutamate site. Disulfide bonds link C249–C538, C372–C388, C428–C435, C520–C539, C524–C542, C545–C557, and C560–C573. An N-linked (GlcNAc...) asparagine glycan is attached at N301. Residue D312 coordinates L-glutamate. K405 lines the L-glutamate pocket. The chain crosses the membrane as a helical span at residues 587–607 (WAVLPLFLAVVGIAATLFVVV). Topologically, residues 608–624 (TFVRYNDTPIVKASGRE) are cytoplasmic. Residues 625–645 (LSYVLLAGIFLCYATTFLMIA) form a helical membrane-spanning segment. The Extracellular portion of the chain corresponds to 646–653 (EPDLGTCS). Residues 654–671 (LRRIFLGLGMSISYAALL) traverse the membrane as a helical segment. At 672 to 699 (TKTNRIYRIFEQGKRSVSAPRFISPASQ) the chain is on the cytoplasmic side. A helical transmembrane segment spans residues 700–720 (LAITFVLISLQLLCICVWFVV). The Extracellular portion of the chain corresponds to 721-751 (DPSHSVVDFQDQRTLDPRFARGVLKCDISDL). Residues 752 to 772 (SLICLLGYSMLLMVTCTVYAI) traverse the membrane as a helical segment. The Cytoplasmic segment spans residues 773–786 (KTRGVPETFNEAKP). Residues 787-807 (IGFTMYTTCIVWLAFIPIFFG) traverse the membrane as a helical segment. Topologically, residues 808 to 826 (TSQSADKLYIQTTTLTVSV) are extracellular. Residues 827-847 (SLSASVSLGMLYMPKVYIILF) traverse the membrane as a helical segment. Over 848–912 (HPEQNVPKRK…TYVTYTNHAI (65 aa)) the chain is Cytoplasmic.

This sequence belongs to the G-protein coupled receptor 3 family. In terms of assembly, interacts with PICK1.

The protein localises to the cell membrane. In terms of biological role, G-protein coupled receptor for glutamate. Ligand binding causes a conformation change that triggers signaling via guanine nucleotide-binding proteins (G proteins) and modulates the activity of down-stream effectors. Signaling inhibits adenylate cyclase activity. This chain is Metabotropic glutamate receptor 4 (Grm4), found in Mus musculus (Mouse).